Here is a 438-residue protein sequence, read N- to C-terminus: Transmembrane protease serine 11F (438 aa).

Residues 1 to 32 are Cytoplasmic-facing; the sequence is MMYAPVEFSEAEFSRAEYQRKQQFWDSVRLAL. Residues 33 to 53 form a helical; Signal-anchor for type II membrane protein membrane-spanning segment; the sequence is FTLAIVAIIGIAIGIVTHFVV. Over 54-438 the chain is Extracellular; the sequence is EDDKSFYYLA…RDWIASKTGM (385 aa). One can recognise an SEA domain in the interval 57-175; that stretch reads KSFYYLASFK…PSFRLTPIDS (119 aa). The Peptidase S1 domain maps to 206-437; sequence IVQGRETAME…YRDWIASKTG (232 aa). A disulfide bond links C233 and C249. Residues H248 and D293 each act as charge relay system in the active site. Disulfide bonds link C358–C374 and C385–C413. Catalysis depends on S389, which acts as the Charge relay system.

The protein belongs to the peptidase S1 family.

Its subcellular location is the membrane. Probable serine protease. The chain is Transmembrane protease serine 11F (TMPRSS11F) from Homo sapiens (Human).